A 630-amino-acid chain; its full sequence is WD repeat-containing protein 26 homolog (630 aa).

A compositionally biased stretch (low complexity) spans 1-13; sequence MQSTSSTSSGSCS. A disordered region spans residues 1-90; that stretch reads MQSTSSTSSG…NNRENTSCSG (90 aa). A phosphoserine mark is found at Ser-36 and Ser-40. 2 stretches are compositionally biased toward polar residues: residues 48 to 57 and 66 to 75; these read PSGSSAATNG and IVNNNGSSSR. The 33-residue stretch at 96–128 folds into the LisH domain; it reads SNQEIIRLIGQYLHDVGLDKSVQTLMLESGCYL. The 62-residue stretch at 129-190 folds into the CTLH domain; the sequence is EHPSATKFRE…EHLDDGNPLD (62 aa). WD repeat units lie at residues 312-351, 359-400, 404-443, 445-482, 485-524, 529-569, and 572-612; these read DHCDEVWFCKFSPDGLKLATGSKDSTVIIWDVDPYKLTLK, QAQL…LVVK, SLEDSLACGAFSRDGARFVCGGQKGQLYLCDLNGTIVDSW, GVRVNSIAFRADNKTILAADNHYRIRGYNFDSPRSDFD, REPHPIMTFSINSADRLALLNVSNQGLHLWDIEDKCLVRR, RQSN…PLAK, and GHTK…SSAT. A disordered region spans residues 604-630; the sequence is PKPNGSSATTESDDCSSSSSSSSWNMT. Residues 609-630 show a composition bias toward low complexity; sequence SSATTESDDCSSSSSSSSWNMT.

The protein localises to the cytoplasm. The protein resides in the mitochondrion. Functionally, G-beta-like protein involved in cell signal transduction. The chain is WD repeat-containing protein 26 homolog from Drosophila melanogaster (Fruit fly).